A 333-amino-acid polypeptide reads, in one-letter code: MATAVHRNGSLTPVSLRVFVLVGFGGGALTQALLFAVFLVLYVVTVLGNLTMIVVITLDARLHSPMYFFLKNLSFVDLCYSSAIAPNALANFLSTSKVISFEACATQFFFFSLLATTETFLLAVMAYDRFMAICSPLRYPVTMCPTTCTRLVLGTFCVGCLNSIVQTSLTFQLPFCSSNRIDHFYCDVPPLLQLACASTALNELFLFGLCGFIIVSTTLAVLVSYGYITVTILRMHSGSGRHKVFSTCGSHLTAVSLFYGTLFVMYAQPGALTSMEQGKVVSIFYTLVIPMLNPLIYSLRNKDVKDALQRLGQRHSLVKAVRGCPAAGGNASV.

The Extracellular portion of the chain corresponds to 1–35 (MATAVHRNGSLTPVSLRVFVLVGFGGGALTQALLF). Residue N8 is glycosylated (N-linked (GlcNAc...) asparagine). A helical transmembrane segment spans residues 36-56 (AVFLVLYVVTVLGNLTMIVVI). Topologically, residues 57-72 (TLDARLHSPMYFFLKN) are cytoplasmic. Residues 73–93 (LSFVDLCYSSAIAPNALANFL) form a helical membrane-spanning segment. The Extracellular segment spans residues 94-106 (STSKVISFEACAT). A disulfide bridge links C104 with C196. A helical transmembrane segment spans residues 107–127 (QFFFFSLLATTETFLLAVMAY). Residues 128 to 150 (DRFMAICSPLRYPVTMCPTTCTR) are Cytoplasmic-facing. The chain crosses the membrane as a helical span at residues 151-171 (LVLGTFCVGCLNSIVQTSLTF). Topologically, residues 172–203 (QLPFCSSNRIDHFYCDVPPLLQLACASTALNE) are extracellular. The chain crosses the membrane as a helical span at residues 204–224 (LFLFGLCGFIIVSTTLAVLVS). The Cytoplasmic portion of the chain corresponds to 225–251 (YGYITVTILRMHSGSGRHKVFSTCGSH). The chain crosses the membrane as a helical span at residues 252 to 272 (LTAVSLFYGTLFVMYAQPGAL). At 273–278 (TSMEQG) the chain is on the extracellular side. A helical transmembrane segment spans residues 279-299 (KVVSIFYTLVIPMLNPLIYSL). Residues 300–333 (RNKDVKDALQRLGQRHSLVKAVRGCPAAGGNASV) are Cytoplasmic-facing.

The protein belongs to the G-protein coupled receptor 1 family.

The protein resides in the cell membrane. Odorant receptor. This is Olfactory receptor 9S13 from Mus musculus (Mouse).